Reading from the N-terminus, the 205-residue chain is Small ribosomal subunit protein uS4 (205 aa).

Residues Asn-18–Leu-45 form a disordered region. The S4 RNA-binding domain occupies Arg-94–Ser-157.

The protein belongs to the universal ribosomal protein uS4 family. In terms of assembly, part of the 30S ribosomal subunit. Contacts protein S5. The interaction surface between S4 and S5 is involved in control of translational fidelity.

In terms of biological role, one of the primary rRNA binding proteins, it binds directly to 16S rRNA where it nucleates assembly of the body of the 30S subunit. Its function is as follows. With S5 and S12 plays an important role in translational accuracy. In Rhodopseudomonas palustris (strain BisA53), this protein is Small ribosomal subunit protein uS4.